A 317-amino-acid polypeptide reads, in one-letter code: Heme A synthase (317 aa).

At 1–6 (MQRSLK) the chain is on the cytoplasmic side. Residues 7 to 27 (WFASATTLAMLFVLIGGALVT) form a helical membrane-spanning segment. The Extracellular segment spans residues 28–62 (KTGSGMGCGRSWPLCNGQWVPDHITPELIIELSHR). C35 and C42 form a disulfide bridge. E58 is an active-site residue. H61 serves as a coordination point for heme o. The chain crosses the membrane as a helical span at residues 63 to 83 (LVSGLAGIMVLILSIWAWRAI). The Cytoplasmic segment spans residues 84 to 90 (GHVQETK). Residues 91 to 111 (FLAVISFVFLVLQGLIGAAAV) traverse the membrane as a helical segment. Over 112–121 (VWGQSDFVLA) the chain is Extracellular. Residues 122-142 (LHFGISLISFAAVLLLTLLIF) traverse the membrane as a helical segment. Heme o is bound at residue H123. Over 143 to 159 (EIDKTFSAASLSLDGKM) the chain is Cytoplasmic. The helical transmembrane segment at 160 to 180 (RFHIYGITIYSYIVVYTGALV) threads the bilayer. At 181 to 211 (RHTNASLACPSWPLCAKTRLLPVQFHEWVQM) the chain is on the extracellular side. C189 and C195 are joined by a disulfide. Residues 212-232 (GHRLAAAVIIIWIAAAAIHAV) traverse the membrane as a helical segment. H213 lines the heme b pocket. Residues 233–243 (RHYRRQPVIYY) are Cytoplasmic-facing. Residues 244–264 (GWLIALLLVLAQMTTGALVVF) form a helical membrane-spanning segment. Residues 265–270 (TQLNLY) lie on the Extracellular side of the membrane. Residues 271–291 (IALAHAFFISCLFGVLSYLLL) form a helical membrane-spanning segment. H275 serves as a coordination point for heme b. The Cytoplasmic segment spans residues 292–317 (LALRTRRAPVKAADHSAGEAAPATLK).

Belongs to the COX15/CtaA family. Type 1 subfamily. As to quaternary structure, interacts with CtaB. The cofactor is heme b.

The protein localises to the cell membrane. The catalysed reaction is Fe(II)-heme o + 2 A + H2O = Fe(II)-heme a + 2 AH2. The protein operates within porphyrin-containing compound metabolism; heme A biosynthesis; heme A from heme O: step 1/1. In terms of biological role, catalyzes the conversion of heme O to heme A by two successive hydroxylations of the methyl group at C8. The first hydroxylation forms heme I, the second hydroxylation results in an unstable dihydroxymethyl group, which spontaneously dehydrates, resulting in the formyl group of heme A. The sequence is that of Heme A synthase from Geobacillus kaustophilus (strain HTA426).